A 285-amino-acid polypeptide reads, in one-letter code: Anamorsin homolog 1 (285 aa).

The segment at 1 to 150 (MEATVLLVTD…QKPTWETGSS (150 aa)) is N-terminal SAM-like domain. The interval 150–195 (SFSLKKKSVQKQESLPKPGALSVKPEMNVDLEDLIDEESLLSEEDL) is linker. Residues Cys206, Cys215, Cys218, and Cys220 each coordinate [2Fe-2S] cluster. The tract at residues 206–220 (CEVSTKRKACKNCTC) is fe-S binding site A. Cys246, Cys249, Cys257, and Cys260 together coordinate [4Fe-4S] cluster. 2 consecutive short sequence motifs (cx2C motif) follow at residues 246 to 249 (CGNC) and 257 to 260 (CSSC). A fe-S binding site B region spans residues 246–260 (CGNCGLGDAFRCSSC).

Belongs to the anamorsin family. Monomer. [2Fe-2S] cluster serves as cofactor. The cofactor is [4Fe-4S] cluster.

It is found in the cytoplasm. Its subcellular location is the mitochondrion intermembrane space. Its function is as follows. Component of the cytosolic iron-sulfur (Fe-S) protein assembly (CIA) machinery. Required for the maturation of extramitochondrial Fe-S proteins. Part of an electron transfer chain functioning in an early step of cytosolic Fe-S biogenesis, facilitating the de novo assembly of a [4Fe-4S] cluster on the cytosolic Fe-S scaffold complex. Electrons are transferred from NADPH via a FAD- and FMN-containing diflavin oxidoreductase. Together with the diflavin oxidoreductase, also required for the assembly of the diferric tyrosyl radical cofactor of ribonucleotide reductase (RNR), probably by providing electrons for reduction during radical cofactor maturation in the catalytic small subunit. The protein is Anamorsin homolog 1 of Picea sitchensis (Sitka spruce).